We begin with the raw amino-acid sequence, 64 residues long: Potassium channel toxin kappa-KTx 4.1 (64 aa).

An N-terminal signal peptide occupies residues 1–26 (MKSTLMTASLLILVVLFIIDYASVYA). The propeptide occupies 27–38 (EFIDGEISLERE). 2 cysteine pairs are disulfide-bonded: cysteine 43–cysteine 61 and cysteine 47–cysteine 57.

It belongs to the short scorpion toxin superfamily. Potassium channel inhibitor kappa-KTx family. Kappa-KTx 4 subfamily. As to expression, expressed by the venom gland.

It localises to the secreted. Its function is as follows. Potassium channel inhibitor (Kv). In Heterometrus petersii (Asian forest scorpion), this protein is Potassium channel toxin kappa-KTx 4.1.